The following is a 498-amino-acid chain: Elastase (498 aa).

Positions 1 to 23 (MKKVSTLDLLFVAIMGVSPAAFA) are cleaved as a signal peptide. The propeptide occupies 24 to 197 (ADLIDVSKLP…VLDQWEGLAH (174 aa)). An intrachain disulfide couples Cys-227 to Cys-255. Asp-333 serves as a coordination point for Ca(2+). His-337 provides a ligand contact to Zn(2+). Residue Glu-338 is part of the active site. Zn(2+) is bound by residues His-341 and Glu-361. Ca(2+) is bound by residues Glu-369, Glu-372, Asp-380, and Leu-382. The active-site Proton donor is His-420. Residues Cys-467 and Cys-494 are joined by a disulfide bond.

This sequence belongs to the peptidase M4 family. As to quaternary structure, monomer. Requires Ca(2+) as cofactor. It depends on Zn(2+) as a cofactor. In terms of processing, made as a membrane-associated pre-pro-protein, which is exported to the periplasm (yielding pro-elastase) with removal of the signal peptide. Under certain conditions pro-elastase can accumulate. The pro-peptide is removed in the periplasm yielding a (mature length) 33 kDa protein, probably by autocatalysis. The pro-peptide probably remains associated with elastase and can be secreted. Further alterations (perhaps processing) seems to be required before secretion into the extracellular space.

The protein resides in the secreted. The enzyme catalyses Hydrolysis of proteins including elastin, collagen types III and IV, fibronectin and immunoglobulin A, generally with bulky hydrophobic group at P1'. Insulin B chain cleavage pattern identical to that of thermolysin, but specificity differs in other respects.. With respect to regulation, inhibited by phosphoramidon. Cleaves host elastin, collagen, IgG, and several complement components as well as endogenous pro-aminopeptidase. Autocatalyses processing of its pro-peptide. Processes the pro-peptide of pro-chitin-binding protein (cbpD). Involved in the pathogenesis of P.aeruginosa infections. In Pseudomonas aeruginosa (strain ATCC 15692 / DSM 22644 / CIP 104116 / JCM 14847 / LMG 12228 / 1C / PRS 101 / PAO1), this protein is Elastase (lasB).